The primary structure comprises 274 residues: MSITSVPGVVDAGVLGAQSAAAVRENALLSSSLWVNVALAGIAILVFVYMGRTIRPGRPRLIWGATLMIPLVSISSYLGLLSGLTVGMIEMPAGHALAGEMVRSQWGRYLTWALSTPMILLALGLLADVDLGSLFTVIAADIGMCVTGLAAAMTTSALLFRWAFYAISCAFFVVVLSALVTDWAASASSAGTAEIFDTLRVLTVVLWLGYPIVWAVGVEGLALVQSVGVTSWAYSVLDVFAKYVFAFILLRWVANNERTVAVAGQTLGTMSSDD.

Positions 1 to 21 (MSITSVPGVVDAGVLGAQSAA) are excised as a propeptide. Residues 22–25 (AVRE) lie on the Extracellular side of the membrane. A helical transmembrane segment spans residues 26-51 (NALLSSSLWVNVALAGIAILVFVYMG). Residues 52–57 (RTIRPG) lie on the Cytoplasmic side of the membrane. A helical membrane pass occupies residues 58–81 (RPRLIWGATLMIPLVSISSYLGLL). At 82 to 105 (SGLTVGMIEMPAGHALAGEMVRSQ) the chain is on the extracellular side. Residues glutamine 105, threonine 111, and serine 115 each contribute to the chloride site. The chain crosses the membrane as a helical span at residues 106–127 (WGRYLTWALSTPMILLALGLLA). Residues 128 to 130 (DVD) are Cytoplasmic-facing. The helical transmembrane segment at 131–154 (LGSLFTVIAADIGMCVTGLAAAMT) threads the bilayer. Residues 155–157 (TSA) lie on the Extracellular side of the membrane. A helical transmembrane segment spans residues 158–180 (LLFRWAFYAISCAFFVVVLSALV). The Cytoplasmic portion of the chain corresponds to 181-192 (TDWAASASSAGT). Residues 193 to 216 (AEIFDTLRVLTVVLWLGYPIVWAV) traverse the membrane as a helical segment. Residues 217–226 (GVEGLALVQS) lie on the Extracellular side of the membrane. Residues 227–255 (VGVTSWAYSVLDVFAKYVFAFILLRWVAN) traverse the membrane as a helical segment. At lysine 242 the chain carries N6-(retinylidene)lysine. Residues 256-274 (NERTVAVAGQTLGTMSSDD) are Cytoplasmic-facing.

This sequence belongs to the archaeal/bacterial/fungal opsin family. As to quaternary structure, homotrimer.

It is found in the cell membrane. Light-driven chloride pump. This is Halorhodopsin (hop) from Halobacterium salinarum (strain ATCC 29341 / DSM 671 / R1).